Here is a 276-residue protein sequence, read N- to C-terminus: 3beta-hydroxysteroid dehydrogenase (276 aa).

NADP(+)-binding positions include 70–71, N97, Y162, and K166; that span reads DV. Y162 acts as the Proton acceptor in catalysis.

The protein belongs to the short-chain dehydrogenases/reductases (SDR) family.

It carries out the reaction 3-oxo-5beta-cholan-24-oate + NADPH + H(+) = isolithocholate + NADP(+). The enzyme catalyses 12alpha-hydroxy-3-oxo-5beta-cholan-24-oate + NADPH + H(+) = isodeoxycholate + NADP(+). The catalysed reaction is 12alpha-hydroxy-3-oxo-5beta-cholan-24-oate + NADH + H(+) = isodeoxycholate + NAD(+). It catalyses the reaction 7alpha,12alpha-dihydroxy-3-oxo-5beta-cholan-24-oate + NADPH + H(+) = isocholate + NADP(+). It carries out the reaction 3-oxochenodeoxycholate + NADPH + H(+) = isochenodeoxycholate + NADP(+). Functionally, involved in the modification of secondary bile acids into iso-bile acids (3beta-bile acids) via epimerization of the 3-OH group through a 3-oxo-intermediate. Catalyzes the reduction of 12-alpha-hydroxy-3-oxo-5-beta-cholan-24-oate (3-oxo-DCA) and 3-oxo-5-beta-cholan-24-oate (3-oxo-LCA) to yield isodeoxycholate (isoDCA) and isolithocholate (isoLCA), respectively. Is also able to catalyze the reduction of 3-dehydrocholate (3-oxo-CA or 7alpha,12alpha-dihydroxy-3-oxo-5beta-cholan-24-oate) and 7-alpha-hydroxy-3-oxo-5-beta-cholan-24-oate (3-oxo-CDCA), into isocholate (isoCA) and isochenodeoxycholate (isoCDCA), respectively. Accepts both NADPH and NADH as cosubstrates. The conversion of the abundant bile acid deoxycholate (DCA) into isoDCA by the gut bacterium R.gnavus favors the growth of the keystone commensal genus Bacteroides, since isoDCA is less cytotoxic than its parent compound, DCA; iso-bile acids have thus a potential role in modulating gut community composition. This Mediterraneibacter gnavus (strain ATCC 29149 / DSM 114966 / JCM 6515 / VPI C7-9) (Ruminococcus gnavus) protein is 3beta-hydroxysteroid dehydrogenase.